Consider the following 240-residue polypeptide: Large ribosomal subunit protein uL3 (240 aa).

2 disordered regions span residues 138–158 and 215–240; these read SISH…KTFK and EAPL…SAEG. Gln-151 is modified (N5-methylglutamine).

This sequence belongs to the universal ribosomal protein uL3 family. In terms of assembly, part of the 50S ribosomal subunit. Forms a cluster with proteins L14 and L19. Methylated by PrmB.

Its function is as follows. One of the primary rRNA binding proteins, it binds directly near the 3'-end of the 23S rRNA, where it nucleates assembly of the 50S subunit. The protein is Large ribosomal subunit protein uL3 of Beijerinckia indica subsp. indica (strain ATCC 9039 / DSM 1715 / NCIMB 8712).